The sequence spans 403 residues: Glucosyl-3-phosphoglycerate synthase (403 aa).

D150 is an a divalent metal cation binding site. Residue 189-192 (GRVT) participates in (2R)-3-phosphoglycerate binding. H273 contributes to the a divalent metal cation binding site.

This sequence belongs to the glycosyltransferase 2 family. Homodimer. Mn(2+) serves as cofactor. It depends on Co(2+) as a cofactor. The cofactor is Mg(2+). Ni(2+) is required as a cofactor.

The enzyme catalyses an NDP-alpha-D-glucose + (2R)-3-phosphoglycerate = (2R)-2-O-(alpha-D-glucopyranosyl)-3-phospho-glycerate + a ribonucleoside 5'-diphosphate + H(+). Its function is as follows. Involved in the biosynthesis of 6-O-methylglucose lipopolysaccarides (MGLPs). Catalyzes the transfer of a glucose (Glc) moiety from uridine diphosphate (UDP-Glc) to the position 2 of 3-phospho-D-glycerate (3-PGA) to form glucosyl-3-phosphoglycerate (GPG). GpgS is most active with UDP-glucose, followed by GDP-glucose, ADP-glucose, and to a lesser extent, TDP-glucose. 3-PGA is the only acceptor for these glucosyl donors. The polypeptide is Glucosyl-3-phosphoglycerate synthase (Persephonella marina (strain DSM 14350 / EX-H1)).